The following is a 362-amino-acid chain: Phosphoserine aminotransferase (362 aa).

Ser-9 and Arg-42 together coordinate L-glutamate. Residues 76 to 77, Trp-102, Thr-153, Asp-174, and Gln-197 each bind pyridoxal 5'-phosphate; that span reads GR. Lys-198 carries the N6-(pyridoxal phosphate)lysine modification. Pyridoxal 5'-phosphate is bound at residue 239–240; sequence NT.

The protein belongs to the class-V pyridoxal-phosphate-dependent aminotransferase family. SerC subfamily. Homodimer. Pyridoxal 5'-phosphate is required as a cofactor.

It is found in the cytoplasm. It catalyses the reaction O-phospho-L-serine + 2-oxoglutarate = 3-phosphooxypyruvate + L-glutamate. The enzyme catalyses 4-(phosphooxy)-L-threonine + 2-oxoglutarate = (R)-3-hydroxy-2-oxo-4-phosphooxybutanoate + L-glutamate. It participates in amino-acid biosynthesis; L-serine biosynthesis; L-serine from 3-phospho-D-glycerate: step 2/3. It functions in the pathway cofactor biosynthesis; pyridoxine 5'-phosphate biosynthesis; pyridoxine 5'-phosphate from D-erythrose 4-phosphate: step 3/5. Its function is as follows. Catalyzes the reversible conversion of 3-phosphohydroxypyruvate to phosphoserine and of 3-hydroxy-2-oxo-4-phosphonooxybutanoate to phosphohydroxythreonine. The chain is Phosphoserine aminotransferase from Klebsiella pneumoniae (strain 342).